The chain runs to 684 residues: Chaperone protein HtpG (684 aa).

An a; substrate-binding region spans residues 1–329 (MSKKGTIGVT…SPDIPLNVSR (329 aa)). Residues 330–548 (SYLQSDANVK…FMRRMRDMAQ (219 aa)) form a b region. Positions 549–684 (LQPGMSFYGE…EFIRRSQRLL (136 aa)) are c.

Belongs to the heat shock protein 90 family. Homodimer.

It localises to the cytoplasm. Functionally, molecular chaperone. Has ATPase activity. The protein is Chaperone protein HtpG of Porphyromonas gingivalis (strain ATCC 33277 / DSM 20709 / CIP 103683 / JCM 12257 / NCTC 11834 / 2561).